The sequence spans 41 residues: Pi-stichotoxin-Hcr5a (41 aa).

3 disulfide bridges follow: Cys4–Cys37, Cys6–Cys30, and Cys20–Cys38.

The protein belongs to the sea anemone type 3 (BDS) potassium channel toxin family.

It localises to the secreted. The protein localises to the nematocyst. Functionally, weakly inhibits human homomeric ASIC3 (IC(50)=5.5 uM). This is Pi-stichotoxin-Hcr5a from Radianthus crispa (Leathery sea anemone).